The sequence spans 157 residues: Lipoprotein signal peptidase (157 aa).

Helical transmembrane passes span 10–30 (LVFM…KYAI), 38–58 (SLMV…LLSF), 59–79 (LEGG…IFLI), and 84–104 (LFKT…SNVL). Active-site residues include Asp114 and Asp131. A helical transmembrane segment spans residues 122–142 (FDFAIFNFADVMIDVGVGVLL).

This sequence belongs to the peptidase A8 family.

The protein resides in the cell inner membrane. It catalyses the reaction Release of signal peptides from bacterial membrane prolipoproteins. Hydrolyzes -Xaa-Yaa-Zaa-|-(S,diacylglyceryl)Cys-, in which Xaa is hydrophobic (preferably Leu), and Yaa (Ala or Ser) and Zaa (Gly or Ala) have small, neutral side chains.. Its pathway is protein modification; lipoprotein biosynthesis (signal peptide cleavage). In terms of biological role, this protein specifically catalyzes the removal of signal peptides from prolipoproteins. This chain is Lipoprotein signal peptidase, found in Helicobacter pylori (strain HPAG1).